A 152-amino-acid polypeptide reads, in one-letter code: Aspartate carbamoyltransferase regulatory chain (152 aa).

4 residues coordinate Zn(2+): Cys109, Cys114, Cys138, and Cys141.

Belongs to the PyrI family. In terms of assembly, contains catalytic and regulatory chains. The cofactor is Zn(2+).

Functionally, involved in allosteric regulation of aspartate carbamoyltransferase. This Thermoplasma volcanium (strain ATCC 51530 / DSM 4299 / JCM 9571 / NBRC 15438 / GSS1) protein is Aspartate carbamoyltransferase regulatory chain.